Here is a 505-residue protein sequence, read N- to C-terminus: uncharacterized protein (505 aa).

The Proton acceptor role is filled by His-431.

Belongs to the GMC oxidoreductase family. FAD serves as cofactor.

This is an uncharacterized protein from Sinorhizobium fredii (strain NBRC 101917 / NGR234).